We begin with the raw amino-acid sequence, 82 residues long: Penaeidin-3d (82 aa).

Positions 1 to 19 (MRLVVCLVFLASFALVCQG) are cleaved as a signal peptide. Position 20 is a pyrrolidone carboxylic acid (Q20). 3 disulfide bridges follow: C51-C66, C55-C73, and C67-C74. Position 81 is a serine amide (S81).

Belongs to the penaeidin family.

It is found in the cytoplasmic granule. Functionally, antibacterial and antifungal activity. Presents chitin-binding activity. The chain is Penaeidin-3d from Penaeus vannamei (Whiteleg shrimp).